The chain runs to 250 residues: MEWTDDAIVLSARPHGETAALAVLLTRGHGRHAGLVHGGQSGRMRPVLEPGNRVAARWAARLVEQLGTLALELERATAAGLLEDPLRLAALSSACALVDAALPEREPHPALFDATLALFDALQTEVWAEIYVRWEIGLLEEAGFGLDFGSCAATGITDNDQLAYVSPRTGRAVSLSAGEPYRDRLLALPPFLVGRSAGGAEEVVQGLALTGHFLDRHLFALRHAEVPAARTRFVDRYRKAHTTSGITPAP.

It belongs to the RecO family.

Involved in DNA repair and RecF pathway recombination. This is DNA repair protein RecO from Rhodospirillum centenum (strain ATCC 51521 / SW).